Reading from the N-terminus, the 136-residue chain is Organic hydroperoxide resistance protein OhrB (136 aa).

This sequence belongs to the OsmC/Ohr family.

Involved in organic hydroperoxide resistance. The protein is Organic hydroperoxide resistance protein OhrB (ohrB) of Bacillus subtilis (strain 168).